A 213-amino-acid chain; its full sequence is NADH-quinone oxidoreductase subunit I (213 aa).

4Fe-4S ferredoxin-type domains are found at residues 74-103 (RFIESENERCIGCGLCEKICISNCIRMETS) and 113-142 (GNYSINLGRCIYCGFCAEVCPELAIVHGTE). The [4Fe-4S] cluster site is built by Cys-83, Cys-86, Cys-89, Cys-93, Cys-122, Cys-125, Cys-128, and Cys-132.

This sequence belongs to the complex I 23 kDa subunit family. As to quaternary structure, NDH-1 is composed of 14 different subunits. Subunits NuoA, H, J, K, L, M, N constitute the membrane sector of the complex. [4Fe-4S] cluster serves as cofactor.

The protein resides in the cell inner membrane. It carries out the reaction a quinone + NADH + 5 H(+)(in) = a quinol + NAD(+) + 4 H(+)(out). In terms of biological role, NDH-1 shuttles electrons from NADH, via FMN and iron-sulfur (Fe-S) centers, to quinones in the respiratory chain. The immediate electron acceptor for the enzyme in this species is believed to be ubiquinone. Couples the redox reaction to proton translocation (for every two electrons transferred, four hydrogen ions are translocated across the cytoplasmic membrane), and thus conserves the redox energy in a proton gradient. This is NADH-quinone oxidoreductase subunit I from Campylobacter jejuni subsp. jejuni serotype O:6 (strain 81116 / NCTC 11828).